A 592-amino-acid chain; its full sequence is Solute carrier family 13 member 2 (592 aa).

A run of 4 helical transmembrane segments spans residues 13-33 (SYLIVFFVPILLLPLPILVPS), 53-73 (ALPLAVTALFPLILFPMMGIV), 86-106 (SNLLFFGGLLVAIAVEHWNLH), and 114-134 (LLIVGVRPAPLILGFMLVTAF). Residues 165–177 (SSNVEEGSNNPTF) are compositionally biased toward polar residues. A disordered region spans residues 165-185 (SSNVEEGSNNPTFELQEPSPQ). 8 consecutive transmembrane segments (helical) span residues 221 to 241 (MSLCVCYSASIGGIATLTGTA), 274 to 294 (MVILLLLAWLWLQILFLGFNF), 324 to 344 (PMTFAEKAISILFVILVLLWF), 371 to 391 (GTVAIFIGIIMFIIPSKFPGL), 450 to 470 (PLQSVPAPAIAIILSLLVATF), 482 to 502 (IFLPILASMAQAICLHPLYVM), 511 to 531 (LAFMLPVATPPNAIVFSFGDL), and 545 to 565 (IIGVLIIALAINSWGIPLFSL).

Belongs to the SLC13A/DASS transporter (TC 2.A.47) family. NADC subfamily. Expressed in kidney and intestine. In kidney expressed in the proximal tubule (at protein level).

Its subcellular location is the apical cell membrane. The enzyme catalyses succinate(out) + 3 Na(+)(out) = succinate(in) + 3 Na(+)(in). The catalysed reaction is fumarate(out) + 3 Na(+)(out) = fumarate(in) + 3 Na(+)(in). It catalyses the reaction 2-oxoglutarate(out) + 3 Na(+)(out) = 2-oxoglutarate(in) + 3 Na(+)(in). Li(+) decreases succinate transport in the presence of Na(+), by competing at one of the three cation binding sites. Functionally, low-affinity sodium-dicarboxylate cotransporter, that mediates the entry of citric acid cycle intermediates, such as succinate, citrate, fumarate and alpha-ketoglutarate (2-oxoglutarate) into the small intestine and renal proximal tubule. Transports the dicarboxylate into the cell with a probable stoichiometry of 3 Na(+) for 1 divalent dicarboxylate, rendering the process electrogenic. Citrate is transported in protonated form as a divalent anion, rather than the trivalent form which is normally found in blood. Has a critical role in renal dicarboxylate transport. In Homo sapiens (Human), this protein is Solute carrier family 13 member 2 (SLC13A2).